Here is a 315-residue protein sequence, read N- to C-terminus: Archaeosortase A (315 aa).

A run of 7 helical transmembrane segments spans residues 12 to 32 (VIPY…AGVA), 47 to 67 (AGAW…FAFV), 74 to 94 (TVLI…VFAG), 173 to 193 (VVFE…IAAV), 204 to 224 (IALS…FIAL), 227 to 247 (GYQW…FGLT), and 260 to 280 (VLAQ…IARW). Cys177 (acyl-thioester intermediate) is an active-site residue. The active-site Proton donor is Arg218.

The protein belongs to the exosortase/archaeosortase family. Archaeosortase A subfamily.

The protein localises to the cell membrane. In terms of biological role, transpeptidase that recognizes and modifies its substrate by proteolytic cleavage of a sorting signal. Following cleavage, a covalent intermediate is formed via a thioester bond between the archaeosortase and its substrate, which is then transferred and covalently attached to the cell membrane. This Natronomonas pharaonis (strain ATCC 35678 / DSM 2160 / CIP 103997 / JCM 8858 / NBRC 14720 / NCIMB 2260 / Gabara) (Halobacterium pharaonis) protein is Archaeosortase A.